The chain runs to 115 residues: U3-lycotoxin-Ls1a (115 aa).

An N-terminal signal peptide occupies residues 1–20 (MKFVLLFGVFLVTLFSYSSA). The propeptide occupies 21–44 (EMLDDFDQADEDELLSLIEKEEAR). 4 disulfide bridges follow: C48-C63, C55-C72, C62-C87, and C74-C85.

Belongs to the neurotoxin 19 (CSTX) family. 01 subfamily. As to expression, expressed by the venom gland.

Its subcellular location is the secreted. This chain is U3-lycotoxin-Ls1a, found in Lycosa singoriensis (Wolf spider).